A 76-amino-acid polypeptide reads, in one-letter code: ATP synthase subunit 9, mitochondrial (76 aa).

Met1 is modified (N-formylmethionine). Helical transmembrane passes span 14 to 34 (ISTI…AALI) and 52 to 72 (ILGF…SFLL).

Belongs to the ATPase C chain family. As to quaternary structure, F-type ATPases have 2 components, CF(1) - the catalytic core - and CF(0) - the membrane proton channel. In yeast, the dimeric form of ATP synthase consists of 18 polypeptides: alpha, beta, gamma, delta, epsilon, 4 (B), 5 (OSCP), 6 (A), 8, 9 (C), d, E (Tim11), f, g, h, i, j and k.

Its subcellular location is the mitochondrion membrane. Mitochondrial membrane ATP synthase (F(1)F(0) ATP synthase or Complex V) produces ATP from ADP in the presence of a proton gradient across the membrane which is generated by electron transport complexes of the respiratory chain. F-type ATPases consist of two structural domains, F(1) - containing the extramembraneous catalytic core and F(0) - containing the membrane proton channel, linked together by a central stalk and a peripheral stalk. During catalysis, ATP synthesis in the catalytic domain of F(1) is coupled via a rotary mechanism of the central stalk subunits to proton translocation. Part of the complex F(0) domain. A homomeric c-ring of probably 10 subunits is part of the complex rotary element. The protein is ATP synthase subunit 9, mitochondrial (ATP9) of Saccharomyces paradoxus (Yeast).